The sequence spans 546 residues: Probable protein kinase UbiB (546 aa).

The Protein kinase domain occupies 124-502 (DFDIQPLASA…HVRQSQSRYL (379 aa)). Residues 130 to 138 (LASASIAQV) and lysine 153 contribute to the ATP site. Aspartate 288 serves as the catalytic Proton acceptor. The next 2 helical transmembrane spans lie at 501 to 521 (YLLG…VNRP) and 522 to 542 (EWGL…LVGW).

It belongs to the ABC1 family. UbiB subfamily.

It is found in the cell inner membrane. It participates in cofactor biosynthesis; ubiquinone biosynthesis [regulation]. Is probably a protein kinase regulator of UbiI activity which is involved in aerobic coenzyme Q (ubiquinone) biosynthesis. The protein is Probable protein kinase UbiB of Salmonella enteritidis PT4 (strain P125109).